The sequence spans 189 residues: Elongation factor P (189 aa).

Belongs to the elongation factor P family.

It localises to the cytoplasm. Its pathway is protein biosynthesis; polypeptide chain elongation. Involved in peptide bond synthesis. Stimulates efficient translation and peptide-bond synthesis on native or reconstituted 70S ribosomes in vitro. Probably functions indirectly by altering the affinity of the ribosome for aminoacyl-tRNA, thus increasing their reactivity as acceptors for peptidyl transferase. The polypeptide is Elongation factor P (Chloroflexus aggregans (strain MD-66 / DSM 9485)).